The chain runs to 386 residues: Histidinol-phosphate aminotransferase (386 aa).

Residue K240 is modified to N6-(pyridoxal phosphate)lysine.

This sequence belongs to the class-II pyridoxal-phosphate-dependent aminotransferase family. Histidinol-phosphate aminotransferase subfamily. As to quaternary structure, homodimer. Requires pyridoxal 5'-phosphate as cofactor.

It carries out the reaction L-histidinol phosphate + 2-oxoglutarate = 3-(imidazol-4-yl)-2-oxopropyl phosphate + L-glutamate. It functions in the pathway amino-acid biosynthesis; L-histidine biosynthesis; L-histidine from 5-phospho-alpha-D-ribose 1-diphosphate: step 7/9. The chain is Histidinol-phosphate aminotransferase from Bifidobacterium longum (strain NCC 2705).